The primary structure comprises 254 residues: Protein N-terminal and lysine N-methyltransferase EFM7 (254 aa).

S-adenosyl-L-methionine is bound by residues Trp-57, 84-86, Asp-106, Trp-138, and Ser-165; that span reads GAA.

It belongs to the class I-like SAM-binding methyltransferase superfamily. EFM7 family.

It localises to the cytoplasm. Its function is as follows. S-adenosyl-L-methionine-dependent protein methyltransferase that trimethylates the N-terminal glycine 'Gly-2' of elongation factor 1-alpha, before also catalyzing the mono- and dimethylation of 'Lys-3'. The sequence is that of Protein N-terminal and lysine N-methyltransferase EFM7 from Debaryomyces hansenii (strain ATCC 36239 / CBS 767 / BCRC 21394 / JCM 1990 / NBRC 0083 / IGC 2968) (Yeast).